The primary structure comprises 343 residues: N-acetyl-gamma-glutamyl-phosphate reductase (343 aa).

Cysteine 147 is an active-site residue.

Belongs to the NAGSA dehydrogenase family. Type 1 subfamily.

It localises to the cytoplasm. It carries out the reaction N-acetyl-L-glutamate 5-semialdehyde + phosphate + NADP(+) = N-acetyl-L-glutamyl 5-phosphate + NADPH + H(+). The protein operates within amino-acid biosynthesis; L-arginine biosynthesis; N(2)-acetyl-L-ornithine from L-glutamate: step 3/4. Functionally, catalyzes the NADPH-dependent reduction of N-acetyl-5-glutamyl phosphate to yield N-acetyl-L-glutamate 5-semialdehyde. The sequence is that of N-acetyl-gamma-glutamyl-phosphate reductase from Listeria monocytogenes serotype 4b (strain CLIP80459).